We begin with the raw amino-acid sequence, 426 residues long: Chaperone SurA (426 aa).

The N-terminal stretch at 1 to 13 is a signal peptide; sequence MLGALFLSTAASA. 2 consecutive PpiC domains span residues 164–265 and 274–373; these read SEEL…KLLD and RDEV…EVLG.

The protein localises to the periplasm. The catalysed reaction is [protein]-peptidylproline (omega=180) = [protein]-peptidylproline (omega=0). In terms of biological role, chaperone involved in the correct folding and assembly of outer membrane proteins. Recognizes specific patterns of aromatic residues and the orientation of their side chains, which are found more frequently in integral outer membrane proteins. May act in both early periplasmic and late outer membrane-associated steps of protein maturation. This is Chaperone SurA from Pseudomonas fluorescens (strain ATCC BAA-477 / NRRL B-23932 / Pf-5).